We begin with the raw amino-acid sequence, 173 residues long: Protein TraS (173 aa).

The protein resides in the cell inner membrane. Its function is as follows. Involved in surface exclusion. In Escherichia coli (strain K12), this protein is Protein TraS (traS).